Reading from the N-terminus, the 1099-residue chain is Exonuclease/helicase subunit RexB (1099 aa).

The [4Fe-4S] cluster site is built by C766, C1056, C1059, and C1065.

It belongs to the helicase family. AddB/RexB type 2 subfamily. In terms of assembly, heterodimer of RexA (AddA) and RexB. Requires Mg(2+) as cofactor. It depends on [4Fe-4S] cluster as a cofactor.

The heterodimer acts both as an ATP-dependent DNA helicase and an ATP-dependent, dual-direction single-stranded exonuclease. Recognizes the L.lactis chi site (5'-GCGCGTG-3'), which stimulates homologous recombination. This subunit has 5'-&gt;3' exonuclease activity. In terms of biological role, the heterodimer acts as both an ATP-dependent DNA helicase and an ATP-dependent, dual-direction single-stranded exonuclease. Recognizes the chi site generating a DNA molecule suitable for the initiation of homologous recombination. This subunit has 5' -&gt; 3' nuclease activity but not helicase activity. This Lactococcus lactis subsp. cremoris (strain MG1363) protein is Exonuclease/helicase subunit RexB.